The following is a 70-amino-acid chain: DNA-directed RNA polymerase subunit omega (70 aa).

This sequence belongs to the RNA polymerase subunit omega family. The RNAP catalytic core consists of 2 alpha, 1 beta, 1 beta' and 1 omega subunit. When a sigma factor is associated with the core the holoenzyme is formed, which can initiate transcription.

It catalyses the reaction RNA(n) + a ribonucleoside 5'-triphosphate = RNA(n+1) + diphosphate. Functionally, promotes RNA polymerase assembly. Latches the N- and C-terminal regions of the beta' subunit thereby facilitating its interaction with the beta and alpha subunits. In Marinobacter nauticus (strain ATCC 700491 / DSM 11845 / VT8) (Marinobacter aquaeolei), this protein is DNA-directed RNA polymerase subunit omega.